The primary structure comprises 372 residues: Histidinol-phosphate aminotransferase (372 aa).

Lys-234 carries the N6-(pyridoxal phosphate)lysine modification.

This sequence belongs to the class-II pyridoxal-phosphate-dependent aminotransferase family. Histidinol-phosphate aminotransferase subfamily. In terms of assembly, homodimer. It depends on pyridoxal 5'-phosphate as a cofactor.

The enzyme catalyses L-histidinol phosphate + 2-oxoglutarate = 3-(imidazol-4-yl)-2-oxopropyl phosphate + L-glutamate. The protein operates within amino-acid biosynthesis; L-histidine biosynthesis; L-histidine from 5-phospho-alpha-D-ribose 1-diphosphate: step 7/9. This Corynebacterium efficiens (strain DSM 44549 / YS-314 / AJ 12310 / JCM 11189 / NBRC 100395) protein is Histidinol-phosphate aminotransferase (hisC).